A 276-amino-acid chain; its full sequence is Dermonecrotic toxin LlSicTox-alphaIV2ii (276 aa).

His-5 is an active-site residue. Residues Glu-25 and Asp-27 each coordinate Mg(2+). The active-site Nucleophile is the His-41. 2 disulfide bridges follow: Cys-45-Cys-51 and Cys-47-Cys-193. Asp-85 lines the Mg(2+) pocket.

The protein belongs to the arthropod phospholipase D family. Class II subfamily. Mg(2+) serves as cofactor. In terms of tissue distribution, expressed by the venom gland.

It is found in the secreted. The catalysed reaction is an N-(acyl)-sphingosylphosphocholine = an N-(acyl)-sphingosyl-1,3-cyclic phosphate + choline. It carries out the reaction an N-(acyl)-sphingosylphosphoethanolamine = an N-(acyl)-sphingosyl-1,3-cyclic phosphate + ethanolamine. It catalyses the reaction a 1-acyl-sn-glycero-3-phosphocholine = a 1-acyl-sn-glycero-2,3-cyclic phosphate + choline. The enzyme catalyses a 1-acyl-sn-glycero-3-phosphoethanolamine = a 1-acyl-sn-glycero-2,3-cyclic phosphate + ethanolamine. In terms of biological role, dermonecrotic toxins cleave the phosphodiester linkage between the phosphate and headgroup of certain phospholipids (sphingolipid and lysolipid substrates), forming an alcohol (often choline) and a cyclic phosphate. This toxin acts on sphingomyelin (SM). It may also act on ceramide phosphoethanolamine (CPE), lysophosphatidylcholine (LPC) and lysophosphatidylethanolamine (LPE), but not on lysophosphatidylserine (LPS), and lysophosphatidylglycerol (LPG). It acts by transphosphatidylation, releasing exclusively cyclic phosphate products as second products. Induces dermonecrosis, hemolysis, increased vascular permeability, edema, inflammatory response, and platelet aggregation. The sequence is that of Dermonecrotic toxin LlSicTox-alphaIV2ii from Loxosceles laeta (South American recluse spider).